The sequence spans 138 residues: Nucleoside diphosphate kinase (138 aa).

6 residues coordinate ATP: Lys11, Phe59, Arg87, Thr93, Arg104, and Asn114. The Pros-phosphohistidine intermediate role is filled by His117.

This sequence belongs to the NDK family. Mg(2+) is required as a cofactor.

The protein resides in the cytoplasm. The catalysed reaction is a 2'-deoxyribonucleoside 5'-diphosphate + ATP = a 2'-deoxyribonucleoside 5'-triphosphate + ADP. The enzyme catalyses a ribonucleoside 5'-diphosphate + ATP = a ribonucleoside 5'-triphosphate + ADP. Major role in the synthesis of nucleoside triphosphates other than ATP. The ATP gamma phosphate is transferred to the NDP beta phosphate via a ping-pong mechanism, using a phosphorylated active-site intermediate. The sequence is that of Nucleoside diphosphate kinase from Saccharolobus solfataricus (strain ATCC 35092 / DSM 1617 / JCM 11322 / P2) (Sulfolobus solfataricus).